Reading from the N-terminus, the 533-residue chain is Receptor homology region, transmembrane domain- and RING domain-containing protein 1 (533 aa).

Positions 1–26 are cleaved as a signal peptide; that stretch reads MNRRRTMLLLICLCATFCLMTQLGAA. Topologically, residues 27-167 are lumenal; the sequence is NVVLMGTNLT…LPAFENSAWS (141 aa). A glycan (N-linked (GlcNAc...) asparagine) is linked at Asn34. Cys68 and Cys91 are joined by a disulfide. One can recognise a PA domain in the interval 84-145; sequence ALIIRGGCTF…ISKASGEVLK (62 aa). The helical transmembrane segment at 168–188 threads the bilayer; it reads IMAISFISLLAMSAVLATCFF. Residues 189–533 are Cytoplasmic-facing; sequence VRRHHIRRDR…MASAQSLPGC (345 aa). Residues 236 to 278 form an RING-type; atypical zinc finger; that stretch reads CAICLEDYNVGEKLRVLPCRHKFHAACVDLWLTTWRTFCPVCK. Disordered regions lie at residues 309–329 and 440–476; these read SFRS…PSSQ and LRRC…LAGA. The segment covering 448–463 has biased composition (polar residues); the sequence is PSLSTMAPQSPQQSQL.

The protein localises to the prevacuolar compartment membrane. The protein resides in the protein storage vacuole membrane. It localises to the golgi apparatus membrane. Its function is as follows. Involved in the trafficking of vacuolar proteins. Functions probably as a sorting receptor for protein trafficking to the protein storage vacuole (PSV) by binding the C-terminal vacuolar sorting determinant (VSD) of vacuolar-sorted proteins. This Oryza sativa subsp. japonica (Rice) protein is Receptor homology region, transmembrane domain- and RING domain-containing protein 1.